We begin with the raw amino-acid sequence, 369 residues long: Flagellar P-ring protein 2 (369 aa).

The signal sequence occupies residues 1–24 (MCAFAAILSLLSVLLMATSRSSDA).

It belongs to the FlgI family. The basal body constitutes a major portion of the flagellar organelle and consists of four rings (L,P,S, and M) mounted on a central rod.

It localises to the periplasm. The protein resides in the bacterial flagellum basal body. Assembles around the rod to form the L-ring and probably protects the motor/basal body from shearing forces during rotation. The polypeptide is Flagellar P-ring protein 2 (Burkholderia thailandensis (strain ATCC 700388 / DSM 13276 / CCUG 48851 / CIP 106301 / E264)).